The following is a 221-amino-acid chain: Glutathione S-transferase alpha-5 (221 aa).

In terms of domain architecture, GST N-terminal spans 3-83 (GKPVLHYFDG…YIATKYNLYG (81 aa)). K4 is modified (N6-succinyllysine). Residues Y9, R45, 54–55 (QV), and 67–68 (QT) each bind glutathione. Positions 85–207 (DMKERALIDM…LQPGSQRKPF (123 aa)) constitute a GST C-terminal domain.

Belongs to the GST superfamily. Alpha family. As to quaternary structure, heterodimer of YC1 and YC2. In terms of tissue distribution, liver, nasal mucosa and epididymis.

Its subcellular location is the cytoplasm. It catalyses the reaction RX + glutathione = an S-substituted glutathione + a halide anion + H(+). Its function is as follows. Conjugation of reduced glutathione to a wide number of exogenous and endogenous hydrophobic electrophiles. Has substantial activity toward aflatoxin B1-8,9-epoxide. This Rattus norvegicus (Rat) protein is Glutathione S-transferase alpha-5 (Gsta5).